Reading from the N-terminus, the 495-residue chain is Probable cytosol aminopeptidase (495 aa).

2 residues coordinate Mn(2+): Lys-261 and Asp-266. Residue Lys-273 is part of the active site. Residues Asp-284, Asp-343, and Glu-345 each contribute to the Mn(2+) site. The active site involves Arg-347.

This sequence belongs to the peptidase M17 family. The cofactor is Mn(2+).

The protein localises to the cytoplasm. It catalyses the reaction Release of an N-terminal amino acid, Xaa-|-Yaa-, in which Xaa is preferably Leu, but may be other amino acids including Pro although not Arg or Lys, and Yaa may be Pro. Amino acid amides and methyl esters are also readily hydrolyzed, but rates on arylamides are exceedingly low.. It carries out the reaction Release of an N-terminal amino acid, preferentially leucine, but not glutamic or aspartic acids.. Functionally, presumably involved in the processing and regular turnover of intracellular proteins. Catalyzes the removal of unsubstituted N-terminal amino acids from various peptides. In Chelativorans sp. (strain BNC1), this protein is Probable cytosol aminopeptidase.